The chain runs to 337 residues: ADP-ribosylation factor GTPase-activating protein AGD12 (337 aa).

Positions 15-137 (KRRIRDLLTQ…EFLKPSLRIT (123 aa)) constitute an Arf-GAP domain. Residues 30 to 53 (CADCGAPDPKWASANIGVFICLKC) form a C4-type zinc finger. Positions 164–281 (TNSSSQQPQL…AMAFGDPEMF (118 aa)) constitute a C2 domain. The Ca(2+) site is built by aspartate 250, serine 253, and aspartate 256.

Ca(2+) serves as cofactor. Expressed in roots, leaves, flowers and siliques. Low levels of expression in seeds and stems.

It localises to the golgi apparatus. The protein localises to the cell membrane. GTPase-activating protein (GAP) for ADP ribosylation factor (ARF). Binds phosphatidylinositol 3-monophosohate (PI-3-P) and anionic phospholipids. This chain is ADP-ribosylation factor GTPase-activating protein AGD12 (AGD12), found in Arabidopsis thaliana (Mouse-ear cress).